The following is a 251-amino-acid chain: uncharacterized protein (251 aa).

The next 5 membrane-spanning stretches (helical) occupy residues phenylalanine 22 to isoleucine 42, phenylalanine 86 to alanine 106, leucine 120 to valine 140, leucine 157 to valine 177, and isoleucine 205 to alanine 225.

It localises to the cell membrane. This is an uncharacterized protein from Mycoplasma pneumoniae (strain ATCC 29342 / M129 / Subtype 1) (Mycoplasmoides pneumoniae).